The sequence spans 68 residues: Arabinogalactan peptide 1 (68 aa).

An N-terminal signal peptide occupies residues 1 to 30 (MAGQLKSKIVAVAVAAVVVVASSLVGTASA). Ser-40 is lipidated: GPI-anchor amidated serine. Positions 41-68 (GATATAAAAPAFAAVSVAAAALGGYLFC) are cleaved as a propeptide — removed in mature form.

This sequence belongs to the AG-peptide AGP family. Post-translationally, O-glycosylated on hydroxyprolines; noncontiguous hydroxylproline residues are glycosylated with arabinogalactan. As to expression, expressed in roots, stems, flowers and seeds.

Its subcellular location is the vacuole. The protein localises to the aleurone grain membrane. Its function is as follows. Proteoglycan that seems to be implicated in diverse developmental roles such as differentiation, cell-cell recognition, embryogenesis and programmed cell death. This Oryza sativa subsp. japonica (Rice) protein is Arabinogalactan peptide 1 (AGPEP1).